Consider the following 5082-residue polypeptide: Malformin synthetase mlfA (5082 aa).

Residues 225–616 (ERHAANRPHS…CGRADTQVKL (392 aa)) are adenylation 1. Residues 749 to 822 (SRLEQKIQLA…EAASLAEVQE (74 aa)) enclose the Carrier 1 domain. Ser-783 is modified (O-(pantetheine 4'-phosphoryl)serine). The condensation 1 stretch occupies residues 860 to 1291 (ENVFPCTTMQ…ALNTLSLLQA (432 aa)). The tract at residues 1319-1708 (DRWVTRQPEG…GRKDTQVKLR (390 aa)) is adenylation 2. The Carrier 2 domain occupies 1846-1923 (TPTLELERTL…QLAAEVGEPA (78 aa)). Residue Ser-1883 is modified to O-(pantetheine 4'-phosphoryl)serine. Disordered stretches follow at residues 1924–1953 (GQSASSASSTTEEGFTFSTPDDSSTNDGVD) and 1986–2012 (GGSSSNKTPSVSSSSSSSSSSKRKKNA). Composition is skewed to low complexity over residues 1926–1950 (SASSASSTTEEGFTFSTPDDSSTND) and 1988–2005 (SSSNKTPSVSSSSSSSSS). The interval 2058–2473 (EDIYPATALQ…AVSCSDKETL (416 aa)) is condensation 2. Residues 2496–2888 (RRTPHAPAVC…IGRRDGQLKL (393 aa)) form an adenylation 3 region. In terms of domain architecture, Carrier 3 spans 3024-3100 (RPVTSQEHEM…QLICHLNTIR (77 aa)). Ser-3061 carries the O-(pantetheine 4'-phosphoryl)serine modification. Condensation stretches follow at residues 3117-3582 (WVAL…TYDQ) and 3603-4022 (NIYP…EHLV). The interval 4047–4426 (HNSRQAVFDD…VGRKDNQIKF (380 aa)) is adenylation 4. A Carrier 4 domain is found at 4560 to 4636 (MPSTAAERKM…DLSDQAKSLI (77 aa)). Ser-4597 bears the O-(pantetheine 4'-phosphoryl)serine mark. Positions 4673 to 5000 (DVLPTTSFQR…LQTIVQHQNN (328 aa)) are condensation 5.

Belongs to the NRP synthetase family.

Its pathway is secondary metabolite biosynthesis. Its function is as follows. Nonribosomal peptide synthetase; part of the gene cluster that mediates the biosynthesis of malformins, cyclic pentapeptides with a disulfide bond between 2 consecutive cysteins, that show potential anti-tumor as well as antimalarial and antitrypanosomal properties. The nonribosomal peptide synthetase mlfA is responsible of the formation of the cyclic pentapeptide. The malformin biosynthesis clusters in malformin-producing fungi also contain enzymes involved in the formation of the disulfide bond between the two consecutive cysteins within malformins, in addition to additional tailoring enzymes such as methyltransferases or oxidoreductases. They are also composed of up to 4 major facilitator superfamily transporters, and transcription factors probably involved in the regulation of the expression of those clusters. The polypeptide is Malformin synthetase mlfA (Aspergillus luchuensis (strain CBS 106.47)).